The chain runs to 311 residues: MQRFIKWLAVITSLDLLIVLLGGALVTKTGSGQGCGKSWPLCNGEFVPSNLSMETIIELSHRLTSGSAGILVTLLCILSWKYYKHVRETKTLAILSFVFLVAQALMGAAAVVWGQMPAVLAIHFGISLISFASVILLTCLIFEIDQKFDARSLIMDKKMKFHIYGVTIYCYLVVYTGALVRHERASLACPDFPLCSKNRPMPTQLHEWVQMGHRLAAMLIFVWILYAMILAIRHYKQQPVVYWGWIISFILVTLQAIVGILVVFTNASLAMALLHSLFISCLFAVLCYLVMLGTRSKVNAKEAASTSKQTK.

Residues methionine 1–lysine 6 are Cytoplasmic-facing. Residues tryptophan 7 to threonine 27 traverse the membrane as a helical segment. Residues lysine 28–arginine 62 are Extracellular-facing. A disulfide bond links cysteine 35 and cysteine 42. Glutamate 58 is an active-site residue. Histidine 61 contacts heme o. Residues leucine 63 to tyrosine 83 form a helical membrane-spanning segment. Residues lysine 84–threonine 91 lie on the Cytoplasmic side of the membrane. A helical membrane pass occupies residues leucine 92–valine 112. Residues tryptophan 113–alanine 121 are Extracellular-facing. A helical transmembrane segment spans residues isoleucine 122 to phenylalanine 142. Histidine 123 lines the heme o pocket. At glutamate 143–methionine 159 the chain is on the cytoplasmic side. A helical membrane pass occupies residues lysine 160–valine 180. Residues arginine 181 to methionine 211 lie on the Extracellular side of the membrane. An intrachain disulfide couples cysteine 189 to cysteine 195. The helical transmembrane segment at glycine 212 to isoleucine 232 threads the bilayer. Histidine 213 is a heme b binding site. At arginine 233 to tryptophan 243 the chain is on the cytoplasmic side. A helical transmembrane segment spans residues glycine 244–phenylalanine 264. At threonine 265–methionine 271 the chain is on the extracellular side. The chain crosses the membrane as a helical span at residues alanine 272–leucine 292. Histidine 275 provides a ligand contact to heme b. Residues glycine 293–lysine 311 lie on the Cytoplasmic side of the membrane.

This sequence belongs to the COX15/CtaA family. Type 1 subfamily. As to quaternary structure, interacts with CtaB. Requires heme b as cofactor.

The protein resides in the cell membrane. The catalysed reaction is Fe(II)-heme o + 2 A + H2O = Fe(II)-heme a + 2 AH2. It participates in porphyrin-containing compound metabolism; heme A biosynthesis; heme A from heme O: step 1/1. In terms of biological role, catalyzes the conversion of heme O to heme A by two successive hydroxylations of the methyl group at C8. The first hydroxylation forms heme I, the second hydroxylation results in an unstable dihydroxymethyl group, which spontaneously dehydrates, resulting in the formyl group of heme A. This Bacillus cereus (strain 03BB102) protein is Heme A synthase.